The following is a 321-amino-acid chain: Glucokinase (321 aa).

8 to 13 is an ATP binding site; it reads GDVGGT.

The protein belongs to the bacterial glucokinase family.

The protein resides in the cytoplasm. It carries out the reaction D-glucose + ATP = D-glucose 6-phosphate + ADP + H(+). This chain is Glucokinase, found in Shigella sonnei (strain Ss046).